Here is a 252-residue protein sequence, read N- to C-terminus: 5-oxoprolinase subunit A (252 aa).

This sequence belongs to the LamB/PxpA family. In terms of assembly, forms a complex composed of PxpA, PxpB and PxpC.

The enzyme catalyses 5-oxo-L-proline + ATP + 2 H2O = L-glutamate + ADP + phosphate + H(+). Its function is as follows. Catalyzes the cleavage of 5-oxoproline to form L-glutamate coupled to the hydrolysis of ATP to ADP and inorganic phosphate. The sequence is that of 5-oxoprolinase subunit A from Corynebacterium glutamicum (strain R).